Consider the following 348-residue polypeptide: Anthranilate phosphoribosyltransferase (348 aa).

5-phospho-alpha-D-ribose 1-diphosphate is bound by residues glycine 89, 92 to 93 (GD), threonine 97, 99 to 102 (NIST), 117 to 125 (KHGNRSVSS), and serine 129. Glycine 89 serves as a coordination point for anthranilate. Serine 101 is a binding site for Mg(2+). Asparagine 120 serves as a coordination point for anthranilate. Arginine 175 provides a ligand contact to anthranilate. Mg(2+)-binding residues include aspartate 233 and glutamate 234.

This sequence belongs to the anthranilate phosphoribosyltransferase family. In terms of assembly, homodimer. Mg(2+) serves as cofactor.

It carries out the reaction N-(5-phospho-beta-D-ribosyl)anthranilate + diphosphate = 5-phospho-alpha-D-ribose 1-diphosphate + anthranilate. The protein operates within amino-acid biosynthesis; L-tryptophan biosynthesis; L-tryptophan from chorismate: step 2/5. Catalyzes the transfer of the phosphoribosyl group of 5-phosphorylribose-1-pyrophosphate (PRPP) to anthranilate to yield N-(5'-phosphoribosyl)-anthranilate (PRA). This Shewanella sp. (strain W3-18-1) protein is Anthranilate phosphoribosyltransferase.